The chain runs to 357 residues: Peptide chain release factor 1 (357 aa).

Q232 is modified (N5-methylglutamine). The span at 281–305 (DRQHNEMAADRRSQVGSGDRSERIR) shows a compositional bias: basic and acidic residues. The segment at 281–309 (DRQHNEMAADRRSQVGSGDRSERIRTYNF) is disordered.

Belongs to the prokaryotic/mitochondrial release factor family. Post-translationally, methylated by PrmC. Methylation increases the termination efficiency of RF1.

It is found in the cytoplasm. Functionally, peptide chain release factor 1 directs the termination of translation in response to the peptide chain termination codons UAG and UAA. The protein is Peptide chain release factor 1 of Nitratidesulfovibrio vulgaris (strain DSM 19637 / Miyazaki F) (Desulfovibrio vulgaris).